The following is a 275-amino-acid chain: Chlorophyll a-b binding protein 3, chloroplastic (275 aa).

W58 serves as a coordination point for chlorophyll b. Chlorophyll a is bound by residues F78, S84, and E102. Chlorophyll b-binding residues include R107, I142, E169, and R172. Residues K226, E227, N230, R232, Q244, and H259 each coordinate chlorophyll a. A helical transmembrane segment spans residues 233–253 (LAMLAILGYFIQGLVTGVGPY).

This sequence belongs to the light-harvesting chlorophyll a/b-binding (LHC) protein family. In terms of assembly, the LHC complex consists of chlorophyll a-b binding proteins. Binds at least 14 chlorophylls (8 Chl-a and 6 Chl-b) and carotenoids such as lutein and neoxanthin. serves as cofactor. Photoregulated by reversible phosphorylation of its threonine residues.

Its subcellular location is the plastid. The protein localises to the chloroplast thylakoid membrane. Its function is as follows. The light-harvesting complex (LHC) functions as a light receptor, it captures and delivers excitation energy to photosystems with which it is closely associated. May channel protons produced in the catalytic Mn center of water oxidation into the thylakoid lumen. The sequence is that of Chlorophyll a-b binding protein 3, chloroplastic from Pisum sativum (Garden pea).